We begin with the raw amino-acid sequence, 406 residues long: Tryptophan 2,3-dioxygenase (406 aa).

Phosphoserine is present on Ser-19. Residues 72–76 (FIITH) and Arg-144 each bind substrate. His-328 lines the heme pocket. Thr-342 contributes to the substrate binding site.

The protein belongs to the tryptophan 2,3-dioxygenase family. As to quaternary structure, homotetramer. Dimer of dimers. Requires heme as cofactor.

The enzyme catalyses L-tryptophan + O2 = N-formyl-L-kynurenine. It participates in amino-acid degradation; L-tryptophan degradation via kynurenine pathway; L-kynurenine from L-tryptophan: step 1/2. Heme-dependent dioxygenase that catalyzes the oxidative cleavage of the L-tryptophan (L-Trp) pyrrole ring and converts L-tryptophan to N-formyl-L-kynurenine. Catalyzes the oxidative cleavage of the indole moiety. The polypeptide is Tryptophan 2,3-dioxygenase (Bos taurus (Bovine)).